We begin with the raw amino-acid sequence, 165 residues long: 3-isopropylmalate dehydratase small subunit 2 (165 aa).

This sequence belongs to the LeuD family. LeuD type 2 subfamily. As to quaternary structure, heterodimer of LeuC and LeuD.

The catalysed reaction is (2R,3S)-3-isopropylmalate = (2S)-2-isopropylmalate. It functions in the pathway amino-acid biosynthesis; L-leucine biosynthesis; L-leucine from 3-methyl-2-oxobutanoate: step 2/4. In terms of biological role, catalyzes the isomerization between 2-isopropylmalate and 3-isopropylmalate, via the formation of 2-isopropylmaleate. The chain is 3-isopropylmalate dehydratase small subunit 2 (leuD2) from Archaeoglobus fulgidus (strain ATCC 49558 / DSM 4304 / JCM 9628 / NBRC 100126 / VC-16).